Consider the following 120-residue polypeptide: Small ribosomal subunit protein uS13 (120 aa).

Residues 96–120 form a disordered region; sequence PCRGQRTRTNARTRKGPRKAIAGKK.

It belongs to the universal ribosomal protein uS13 family. As to quaternary structure, part of the 30S ribosomal subunit. Forms a loose heterodimer with protein S19. Forms two bridges to the 50S subunit in the 70S ribosome.

Functionally, located at the top of the head of the 30S subunit, it contacts several helices of the 16S rRNA. In the 70S ribosome it contacts the 23S rRNA (bridge B1a) and protein L5 of the 50S subunit (bridge B1b), connecting the 2 subunits; these bridges are implicated in subunit movement. Contacts the tRNAs in the A and P-sites. This chain is Small ribosomal subunit protein uS13, found in Neisseria gonorrhoeae (strain ATCC 700825 / FA 1090).